The primary structure comprises 345 residues: NADPH dehydrogenase (345 aa).

23-26 (SPMC) serves as a coordination point for FMN. Tyrosine 28 is a substrate binding site. Residues alanine 60 and glutamine 102 each contribute to the FMN site. Substrate is bound at residue 164–167 (HGAH). Residues arginine 215 and 307–308 (GR) each bind FMN.

Belongs to the NADH:flavin oxidoreductase/NADH oxidase family. NamA subfamily. As to quaternary structure, homotetramer. Requires FMN as cofactor.

The enzyme catalyses A + NADPH + H(+) = AH2 + NADP(+). Functionally, catalyzes the reduction of the double bond of an array of alpha,beta-unsaturated aldehydes and ketones. It also reduces the nitro group of nitroester and nitroaromatic compounds. It could have a role in detoxification processes. The chain is NADPH dehydrogenase from Bacillus cereus (strain B4264).